The sequence spans 43 residues: Gene 75 protein (43 aa).

This chain is Gene 75 protein (75), found in Mycobacterium (Mycobacteriophage L5).